The following is a 237-amino-acid chain: tRNA (guanine-N(1)-)-methyltransferase (237 aa).

S-adenosyl-L-methionine-binding positions include G113 and 133–138 (MGDYIL).

Belongs to the RNA methyltransferase TrmD family. Homodimer.

The protein localises to the cytoplasm. The enzyme catalyses guanosine(37) in tRNA + S-adenosyl-L-methionine = N(1)-methylguanosine(37) in tRNA + S-adenosyl-L-homocysteine + H(+). Its function is as follows. Specifically methylates guanosine-37 in various tRNAs. The polypeptide is tRNA (guanine-N(1)-)-methyltransferase (Wolinella succinogenes (strain ATCC 29543 / DSM 1740 / CCUG 13145 / JCM 31913 / LMG 7466 / NCTC 11488 / FDC 602W) (Vibrio succinogenes)).